The following is a 264-amino-acid chain: Small ribosomal subunit protein eS4 (264 aa).

The region spanning 42 to 104 is the S4 RNA-binding domain; it reads LPLVIIMRNR…TNENFRLLYD (63 aa).

The protein belongs to the eukaryotic ribosomal protein eS4 family.

It localises to the cytoplasm. This chain is Small ribosomal subunit protein eS4 (RPS4), found in Solanum tuberosum (Potato).